Consider the following 184-residue polypeptide: MSLRKINFVTGNVKKLEEVKAILKNFEVSNVDVDLDEFQGEPEFIAERKCREAVEAVKGPVLVEDTSLCFNAMGGLPGPYIKWFLKNLKPEGLHNMLAGFSDKTAYAQCIFAYTEGLGKPIHVFAGKCPGQIVAPRGDTAFGWDPCFQPDGFKETFGEMDKDVKNEISHRAKALELLKEYFQNN.

10–15 contacts ITP; it reads TGNVKK. Glu37 contacts Mg(2+). ITP-binding positions include Lys49, 65-66, Lys82, 141-144, Lys164, and 169-170; these read DT, FGWD, and HR.

It belongs to the HAM1 NTPase family. In terms of assembly, homodimer. It depends on Mg(2+) as a cofactor. Mn(2+) is required as a cofactor.

The protein localises to the cytoplasm. It catalyses the reaction ITP + H2O = IMP + diphosphate + H(+). It carries out the reaction dITP + H2O = dIMP + diphosphate + H(+). The catalysed reaction is XTP + H2O = XMP + diphosphate + H(+). In terms of biological role, pyrophosphatase that hydrolyzes non-canonical purine nucleotides such as inosine triphosphate (ITP), deoxyinosine triphosphate (dITP) or xanthosine 5'-triphosphate (XTP) to their respective monophosphate derivatives. The enzyme does not distinguish between the deoxy- and ribose forms. Probably excludes non-canonical purines from RNA and DNA precursor pools, thus preventing their incorporation into RNA and DNA and avoiding chromosomal lesions. The chain is Inosine triphosphate pyrophosphatase from Caenorhabditis elegans.